A 27-amino-acid chain; its full sequence is Caerulein precursor fragment R1 (27 aa).

Expressed by the skin glands.

It localises to the secreted. In terms of biological role, antimicrobial peptide. This Xenopus ruwenzoriensis (Uganda clawed frog) protein is Caerulein precursor fragment R1.